A 456-amino-acid chain; its full sequence is Two pore potassium channel c (456 aa).

Low complexity predominate over residues 1-19; the sequence is MDTEPLLSPLSPSPHLLHP. The tract at residues 1–112 is disordered; that stretch reads MDTEPLLSPL…PPSLFDFIGG (112 aa). Residues 1–152 lie on the Cytoplasmic side of the membrane; that stretch reads MDTEPLLSPL…RNPPPPPRRP (152 aa). The span at 52–67 shows a compositional bias: pro residues; it reads HPPPPPPPPPPPPPPP. The chain crosses the membrane as a helical span at residues 153 to 173; sequence AIVLHAFLFLLAYLAMGVTFY. An intramembrane region (pore-forming) is located at residues 192 to 211; sequence DALYFCIVTLCTIGYGDITP. The chain crosses the membrane as a helical span at residues 223–243; the sequence is FVLIGFGFVDILLSGMVSYVL. The Cytoplasmic segment spans residues 244-279; sequence DLQEHLLITALKNPRSVRKHRHNYIFDLKKGRMRVR. A helical membrane pass occupies residues 280–300; that stretch reads MKVALALTVVAICVGVGAAVL. An intramembrane region (pore-forming) is located at residues 310 to 329; the sequence is DAVYLAVMSVTTVGYGDHAF. Residues 336–356 traverse the membrane as a helical segment; it reads LFASAWLLVSTLAVARAFLYL. The Cytoplasmic portion of the chain corresponds to 357–456; that stretch reads AEMRIDKRHR…LNEKKKGKKS (100 aa). EF-hand domains follow at residues 373–408 and 412–447; these read LSRD…EMGK and KDIM…VTDL. Ca(2+) contacts are provided by Asp-386, Asp-388, Asn-390, Tyr-392, Glu-397, Asp-425, Lys-431, and Asp-436.

The protein belongs to the two pore domain potassium channel (TC 1.A.1.7) family. In terms of assembly, homodimer.

It localises to the membrane. Functionally, inward-rectifying potassium channel. In Oryza sativa subsp. japonica (Rice), this protein is Two pore potassium channel c (TPKC).